The chain runs to 109 residues: RNA-binding protein Hfq (109 aa).

A Sm domain is found at 9-68; sequence DPFLNALRKEKVNVSVYLVNGIKLQGQVEAFDQFCIVLRNTVNQMVYKHAISTIVPAKSV. A disordered region spans residues 77 to 109; it reads PYHQNSNDEQDENVDDIHSDDLEIQENEGNIHE.

It belongs to the Hfq family. In terms of assembly, homohexamer.

RNA chaperone that binds small regulatory RNA (sRNAs) and mRNAs to facilitate mRNA translational regulation in response to envelope stress, environmental stress and changes in metabolite concentrations. Also binds with high specificity to tRNAs. This is RNA-binding protein Hfq from Francisella tularensis subsp. mediasiatica (strain FSC147).